Reading from the N-terminus, the 552-residue chain is Probable inorganic phosphate transporter 1-10 (552 aa).

Residues 1–22 (MAPIGVLTALDQARTQYYHFKA) lie on the Cytoplasmic side of the membrane. A helical membrane pass occupies residues 23 to 43 (IVIAGMGLFTDSYDLFCIAPV). At 44 to 68 (MKIVGRVYYSDGGARPGVTPPAVVS) the chain is on the extracellular side. The helical transmembrane segment at 69 to 89 (ATVGVALLGAVIGNVVFGALG) threads the bilayer. The Cytoplasmic portion of the chain corresponds to 90–96 (DRVGRRR). A helical membrane pass occupies residues 97–117 (VYGACLLLMVCSSVGSGFSVC). At 118 to 123 (RTRRCA) the chain is on the extracellular side. A helical membrane pass occupies residues 124 to 144 (LASLCFFRFLLGVGVGGDYPL). Residues 145-158 (SATIMSEFANRRTR) are Cytoplasmic-facing. A helical transmembrane segment spans residues 159 to 179 (GAFIAAVFSMQGFGILASSAV). Over 180–203 (TMAVAAAFDHYTGYPAPLDTPECA) the chain is Extracellular. A helical transmembrane segment spans residues 204 to 224 (DLAWRIILMAGAVPAALTYYW). Residues 225 to 295 (RMSMPETARY…RRFVRQHGRD (71 aa)) are Cytoplasmic-facing. The helical transmembrane segment at 296 to 316 (LFACAAAWFLLDIPYYSSTLF) threads the bilayer. The Extracellular portion of the chain corresponds to 317 to 342 (QSQIYRPLFPAPGLINAFQEAFNVAK). A helical membrane pass occupies residues 343–363 (FQAVIAVASTIPGYFVAVLLI). The Cytoplasmic segment spans residues 364–369 (DRVGRR). The helical transmembrane segment at 370–390 (CLQMAGFLLMAVFLFALAGPY) threads the bilayer. The Extracellular segment spans residues 391-397 (DGYWRDH). A helical transmembrane segment spans residues 398–418 (GAHAGYIVLYSLTFFSANLGP). Residues 419-439 (NTTTFILPAELFPARFRSTCH) lie on the Cytoplasmic side of the membrane. Residues 440–460 (GLSGAAGKLGALVGSIGFLWA) traverse the membrane as a helical segment. Residues 461–473 (SQQKDGAAAGHLP) lie on the Extracellular side of the membrane. A helical membrane pass occupies residues 474–494 (GIGMMYALFVLGGICLLGLAL). Over 495 to 552 (TYVFTPETMMRSLEENESDRAQTQVGDGGSDTEAAKSPASMASSHLSMSPILPARVSV) the chain is Cytoplasmic. The tract at residues 507 to 540 (LEENESDRAQTQVGDGGSDTEAAKSPASMASSHL) is disordered.

Belongs to the major facilitator superfamily. Phosphate:H(+) symporter (TC 2.A.1.9) family. In terms of tissue distribution, expressed at low levels in roots.

It localises to the membrane. Its function is as follows. High-affinity transporter for external inorganic phosphate. The sequence is that of Probable inorganic phosphate transporter 1-10 (PHT1-10) from Oryza sativa subsp. japonica (Rice).